The sequence spans 557 residues: Dihydroxy-acid dehydratase 2 (557 aa).

Position 50 (cysteine 50) interacts with [2Fe-2S] cluster. Aspartate 82 is a binding site for Mg(2+). Cysteine 123 provides a ligand contact to [2Fe-2S] cluster. Mg(2+) contacts are provided by aspartate 124 and lysine 125. Residue lysine 125 is modified to N6-carboxylysine. [2Fe-2S] cluster is bound at residue cysteine 195. Glutamate 447 contributes to the Mg(2+) binding site. Serine 473 (proton acceptor) is an active-site residue.

The protein belongs to the IlvD/Edd family. In terms of assembly, homodimer. The cofactor is [2Fe-2S] cluster. Requires Mg(2+) as cofactor.

It catalyses the reaction (2R)-2,3-dihydroxy-3-methylbutanoate = 3-methyl-2-oxobutanoate + H2O. The catalysed reaction is (2R,3R)-2,3-dihydroxy-3-methylpentanoate = (S)-3-methyl-2-oxopentanoate + H2O. Its pathway is amino-acid biosynthesis; L-isoleucine biosynthesis; L-isoleucine from 2-oxobutanoate: step 3/4. It participates in amino-acid biosynthesis; L-valine biosynthesis; L-valine from pyruvate: step 3/4. Functions in the biosynthesis of branched-chain amino acids. Catalyzes the dehydration of (2R,3R)-2,3-dihydroxy-3-methylpentanoate (2,3-dihydroxy-3-methylvalerate) into 2-oxo-3-methylpentanoate (2-oxo-3-methylvalerate) and of (2R)-2,3-dihydroxy-3-methylbutanoate (2,3-dihydroxyisovalerate) into 2-oxo-3-methylbutanoate (2-oxoisovalerate), the penultimate precursor to L-isoleucine and L-valine, respectively. In Burkholderia lata (strain ATCC 17760 / DSM 23089 / LMG 22485 / NCIMB 9086 / R18194 / 383), this protein is Dihydroxy-acid dehydratase 2.